A 471-amino-acid polypeptide reads, in one-letter code: Maintenance of mitochondrial morphology protein 1 (471 aa).

At 1-21 (MSSPQNTSCPPSQHSLSFTQG) the chain is on the lumenal side. The chain crosses the membrane as a helical span at residues 22–42 (LLLGQLSVVLLIGAFIKFFIF). At 43–471 (GESPSSSSRG…GSLPGAPAVA (429 aa)) the chain is on the cytoplasmic side. The SMP-LTD domain maps to 128 to 370 (QPESLDWFNV…EPRVQLVALP (243 aa)). Disordered stretches follow at residues 271–306 (GTTESSPHLPHPENQNESKPSRQDPEIPTNKDGVRS), 395–415 (EDPATKATHSGFTPVNANRDG), and 448–471 (RGDTQSVGEQLRIPGSLPGAPAVA). The span at 280-295 (PHPENQNESKPSRQDP) shows a compositional bias: basic and acidic residues. Positions 401-410 (ATHSGFTPVN) are enriched in polar residues.

Belongs to the MMM1 family. In terms of assembly, homodimer. Component of the ER-mitochondria encounter structure (ERMES) or MDM complex, composed of MMM1, MDM10, MDM12 and MDM34. An MMM1 homodimer associates with one molecule of MDM12 on each side in a pairwise head-to-tail manner, and the SMP-LTD domains of MMM1 and MDM12 generate a continuous hydrophobic tunnel for phospholipid trafficking.

It localises to the endoplasmic reticulum membrane. Its function is as follows. Component of the ERMES/MDM complex, which serves as a molecular tether to connect the endoplasmic reticulum (ER) and mitochondria. Components of this complex are involved in the control of mitochondrial shape and protein biogenesis, and function in nonvesicular lipid trafficking between the ER and mitochondria. The MDM12-MMM1 subcomplex functions in the major beta-barrel assembly pathway that is responsible for biogenesis of all outer membrane beta-barrel proteins, and acts in a late step after the SAM complex. The MDM10-MDM12-MMM1 subcomplex further acts in the TOM40-specific pathway after the action of the MDM12-MMM1 complex. Essential for establishing and maintaining the structure of mitochondria and maintenance of mtDNA nucleoids. The polypeptide is Maintenance of mitochondrial morphology protein 1 (Arthroderma otae (strain ATCC MYA-4605 / CBS 113480) (Microsporum canis)).